The following is a 415-amino-acid chain: Serine hydroxymethyltransferase (415 aa).

(6S)-5,6,7,8-tetrahydrofolate-binding positions include L117 and 121 to 123; that span reads GHL. The residue at position 226 (K226) is an N6-(pyridoxal phosphate)lysine. (6S)-5,6,7,8-tetrahydrofolate is bound by residues E241 and 349–351; that span reads SPF.

Belongs to the SHMT family. Homodimer. Pyridoxal 5'-phosphate is required as a cofactor.

Its subcellular location is the cytoplasm. The catalysed reaction is (6R)-5,10-methylene-5,6,7,8-tetrahydrofolate + glycine + H2O = (6S)-5,6,7,8-tetrahydrofolate + L-serine. Its pathway is one-carbon metabolism; tetrahydrofolate interconversion. The protein operates within amino-acid biosynthesis; glycine biosynthesis; glycine from L-serine: step 1/1. In terms of biological role, catalyzes the reversible interconversion of serine and glycine with tetrahydrofolate (THF) serving as the one-carbon carrier. This reaction serves as the major source of one-carbon groups required for the biosynthesis of purines, thymidylate, methionine, and other important biomolecules. Also exhibits THF-independent aldolase activity toward beta-hydroxyamino acids, producing glycine and aldehydes, via a retro-aldol mechanism. The protein is Serine hydroxymethyltransferase of Trichlorobacter lovleyi (strain ATCC BAA-1151 / DSM 17278 / SZ) (Geobacter lovleyi).